The sequence spans 517 residues: Protein NETWORKED 4B (517 aa).

Disordered stretches follow at residues 1–29 and 101–159; these read MASS…DSHN and LQKN…EDGD. Over residues 10-21 the composition is skewed to basic residues; sequence KQFKRSMTKKSH. The 81-residue stretch at 21-101 folds into the NAB domain; it reads HSWWWDSHNC…ERYDQASGEL (81 aa). The segment covering 107-119 has biased composition (low complexity); that stretch reads SEIQSQSSLEISS. The segment covering 121–135 has biased composition (basic and acidic residues); that stretch reads TKEKLSRRQSSHKEE. Residues 156–486 adopt a coiled-coil conformation; sequence EDGDEALIRR…EQKREAIRQL (331 aa).

Belongs to the NET family.

In terms of biological role, plant-specific actin binding protein. May be part of a membrane-cytoskeletal adapter complex. This is Protein NETWORKED 4B from Arabidopsis thaliana (Mouse-ear cress).